A 665-amino-acid chain; its full sequence is Soluble lamin-associated protein of 75 kDa (665 aa).

The disordered stretch occupies residues 309–665; sequence AFASTSEGPE…GPGKKKAKLT (357 aa). Polar residues predominate over residues 311 to 326; sequence ASTSEGPEKTPVSTRT. A compositionally biased stretch (basic residues) spans 327–338; the sequence is RSSHLKRPKIGK. 2 positions are modified to phosphoserine: Ser-348 and Ser-377. Residues 376–397 are compositionally biased toward acidic residues; that stretch reads SSEEFLEEEPEQGVIDFEDESG. Residues 412–421 are compositionally biased toward basic and acidic residues; the sequence is QKQDGDKDSA. Acidic residues predominate over residues 440-451; that stretch reads TEDEDSTSEGLE. A phosphoserine mark is found at Ser-447 and Ser-512. Composition is skewed to polar residues over residues 521–533 and 553–566; these read LGSS…VSNI and VSQN…SSVE. A phosphoserine mark is found at Ser-610, Ser-613, and Ser-630. The segment covering 646–665 has biased composition (basic residues); sequence NLRRKAKGHKGPGKKKAKLT.

It belongs to the FAM169 family.

It is found in the nucleus envelope. The protein resides in the nucleus inner membrane. This chain is Soluble lamin-associated protein of 75 kDa (Fam169a), found in Mus musculus (Mouse).